Here is a 204-residue protein sequence, read N- to C-terminus: Large ribosomal subunit protein uL4 (204 aa).

Residues 49–75 (TKGRSDVSGGGKKPWRQKGRGGARAGS) form a disordered region.

Belongs to the universal ribosomal protein uL4 family. In terms of assembly, part of the 50S ribosomal subunit.

In terms of biological role, one of the primary rRNA binding proteins, this protein initially binds near the 5'-end of the 23S rRNA. It is important during the early stages of 50S assembly. It makes multiple contacts with different domains of the 23S rRNA in the assembled 50S subunit and ribosome. Forms part of the polypeptide exit tunnel. This chain is Large ribosomal subunit protein uL4, found in Campylobacter jejuni subsp. jejuni serotype O:23/36 (strain 81-176).